The sequence spans 151 residues: Putative pre-16S rRNA nuclease (151 aa).

The protein belongs to the YqgF nuclease family.

The protein resides in the cytoplasm. In terms of biological role, could be a nuclease involved in processing of the 5'-end of pre-16S rRNA. This Paraburkholderia phymatum (strain DSM 17167 / CIP 108236 / LMG 21445 / STM815) (Burkholderia phymatum) protein is Putative pre-16S rRNA nuclease.